The chain runs to 588 residues: Mitochondrial tRNA methylthiotransferase CDK5RAP1 (588 aa).

A mitochondrion-targeting transit peptide spans 1–30 (MHPLRCVLQVQRLSAPFTSMCWVLLRTCRA). Disordered regions lie at residues 33-53 (SVSS…QKDF) and 70-91 (ASVP…YLSG). The region spanning 99–219 (RKVYLETYGC…LPRLLAVVES (121 aa)) is the MTTase N-terminal domain. Residues C108, C144, C182, C257, C261, and C264 each coordinate [4Fe-4S] cluster. In terms of domain architecture, Radical SAM core spans 243–498 (SPSATSAFVS…TVFREEASKA (256 aa)). The TRAM domain maps to 500–575 (KTSVGCSQLV…SQTLKGHILC (76 aa)).

The protein belongs to the methylthiotransferase family. MiaB subfamily. Interacts with CDK5R1 (p35 form). CDK5RAP1, CDK5RAP2 and CDK5RAP3 show competitive binding to CDK5R1. Probably forms a complex with CDK5R1 and CDK5. The cofactor is [4Fe-4S] cluster. In terms of tissue distribution, expressed in brain, liver, skeletal muscle and heart.

The protein resides in the mitochondrion. It catalyses the reaction N(6)-dimethylallyladenosine(37) in tRNA + (sulfur carrier)-SH + AH2 + 2 S-adenosyl-L-methionine = 2-methylsulfanyl-N(6)-dimethylallyladenosine(37) in tRNA + (sulfur carrier)-H + 5'-deoxyadenosine + L-methionine + A + S-adenosyl-L-homocysteine + 2 H(+). Methylthiotransferase that catalyzes the conversion of N6-(dimethylallyl)adenosine (i(6)A) to 2-methylthio-N6-(dimethylallyl)adenosine (ms(2)i(6)A) at position 37 (adjacent to the 3'-end of the anticodon) of four mitochondrial DNA-encoded tRNAs (Ser(UCN), Phe, Tyr and Trp). Essential for efficient and highly accurate protein translation by the ribosome. Specifically inhibits CDK5 activation by CDK5R1. Essential for efficient mitochondrial protein synthesis and respiratory chain. This chain is Mitochondrial tRNA methylthiotransferase CDK5RAP1, found in Mus musculus (Mouse).